The chain runs to 318 residues: Elongator complex protein 5 (318 aa).

The residue at position 270 (serine 270) is a Phosphoserine.

Belongs to the ELP5 family. As to quaternary structure, component of the elongator complex which consists of ELP1, ELP2, ELP3, ELP4, ELP5 and ELP6; in the complex, is required for optimal binding of ELP3 to ELP4. In terms of processing, tyrosine-phosphorylated.

It localises to the nucleus. It is found in the cytoplasm. It functions in the pathway tRNA modification; 5-methoxycarbonylmethyl-2-thiouridine-tRNA biosynthesis. In terms of biological role, component of the elongator complex which is required for multiple tRNA modifications, including mcm5U (5-methoxycarbonylmethyl uridine), mcm5s2U (5-methoxycarbonylmethyl-2-thiouridine), and ncm5U (5-carbamoylmethyl uridine). The elongator complex catalyzes the formation of carboxymethyluridine in the wobble base at position 34 in tRNAs. Involved in cell migration. The chain is Elongator complex protein 5 (Elp5) from Rattus norvegicus (Rat).